Consider the following 333-residue polypeptide: Phosphate acyltransferase (333 aa).

It belongs to the PlsX family. Homodimer. Probably interacts with PlsY.

It localises to the cytoplasm. It carries out the reaction a fatty acyl-[ACP] + phosphate = an acyl phosphate + holo-[ACP]. It participates in lipid metabolism; phospholipid metabolism. Catalyzes the reversible formation of acyl-phosphate (acyl-PO(4)) from acyl-[acyl-carrier-protein] (acyl-ACP). This enzyme utilizes acyl-ACP as fatty acyl donor, but not acyl-CoA. This chain is Phosphate acyltransferase, found in Clostridium beijerinckii (strain ATCC 51743 / NCIMB 8052) (Clostridium acetobutylicum).